A 365-amino-acid chain; its full sequence is Sulfate/thiosulfate import ATP-binding protein CysA (365 aa).

The ABC transporter domain maps to isoleucine 3–methionine 237. Glycine 35–threonine 42 is an ATP binding site.

This sequence belongs to the ABC transporter superfamily. Sulfate/tungstate importer (TC 3.A.1.6) family. As to quaternary structure, the complex is composed of two ATP-binding proteins (CysA), two transmembrane proteins (CysT and CysW) and a solute-binding protein (CysP).

It localises to the cell inner membrane. The enzyme catalyses sulfate(out) + ATP + H2O = sulfate(in) + ADP + phosphate + H(+). It catalyses the reaction thiosulfate(out) + ATP + H2O = thiosulfate(in) + ADP + phosphate + H(+). Functionally, part of the ABC transporter complex CysAWTP involved in sulfate/thiosulfate import. Responsible for energy coupling to the transport system. The polypeptide is Sulfate/thiosulfate import ATP-binding protein CysA (Salmonella typhimurium (strain LT2 / SGSC1412 / ATCC 700720)).